Reading from the N-terminus, the 478-residue chain is Glycogen synthase (478 aa).

ADP-alpha-D-glucose is bound at residue Lys15.

Belongs to the glycosyltransferase 1 family. Bacterial/plant glycogen synthase subfamily.

It carries out the reaction [(1-&gt;4)-alpha-D-glucosyl](n) + ADP-alpha-D-glucose = [(1-&gt;4)-alpha-D-glucosyl](n+1) + ADP + H(+). The protein operates within glycan biosynthesis; glycogen biosynthesis. Functionally, synthesizes alpha-1,4-glucan chains using ADP-glucose. The protein is Glycogen synthase of Streptococcus uberis (strain ATCC BAA-854 / 0140J).